The sequence spans 411 residues: Secretion apparatus protein BsaZ (411 aa).

A run of 4 helical transmembrane segments spans residues Ile28–Thr48, Ile80–Ser100, Ala137–Ala157, and Ile175–Leu195. The interval Ala341–Ala411 is disordered. Positions Asp370–Ala404 are enriched in low complexity.

It belongs to the type III secretion exporter family.

The protein resides in the cell membrane. Functionally, part of the bsa type III secretion system, is involved in the intracellular replication of invading bacteria inside the host cell. Probably necessary for the lysis of the vacuole membrane and escape into the host cell cytoplasm. In Burkholderia mallei (strain NCTC 10247), this protein is Secretion apparatus protein BsaZ (bsaZ).